Reading from the N-terminus, the 125-residue chain is Protein ApaG (125 aa).

Residues 1 to 125 (MIEQPRICVQ…FRLAIPALIH (125 aa)) form the ApaG domain.

The protein is Protein ApaG of Yersinia pestis bv. Antiqua (strain Antiqua).